Here is a 398-residue protein sequence, read N- to C-terminus: 1,4-beta-D-glucan cellobiohydrolase CEL6C (398 aa).

The first 18 residues, 1–18 (MKITSSAAALALVASAVA), serve as a signal peptide directing secretion. The N-linked (GlcNAc...) asparagine glycan is linked to Asn-70. Asp-125 is an active-site residue. Asp-170 serves as the catalytic Proton donor. 4 residues coordinate substrate: Trp-218, Trp-318, Lys-346, and Glu-350.

Belongs to the glycosyl hydrolase 6 (cellulase B) family. Post-translationally, both N- and O-glycosylated.

The protein resides in the secreted. It catalyses the reaction Hydrolysis of (1-&gt;4)-beta-D-glucosidic linkages in cellulose and cellotetraose, releasing cellobiose from the non-reducing ends of the chains.. Its function is as follows. Exoglucanase that plays an important function in biomass degradation by catalyzing the hydrolysis of the non-reducing end beta-1,4-glucosidic linkages in cellulose and cellotetraose to release cellobiose. Hydrolyzes crystalline and amorphous cellulose but is inactive on hydroxyethyl cellulose, mannan, galactomannan, xyloglucan, arabinoxylan, arabinan, xylan, and pectin. The chain is 1,4-beta-D-glucan cellobiohydrolase CEL6C from Podospora anserina (strain S / ATCC MYA-4624 / DSM 980 / FGSC 10383) (Pleurage anserina).